We begin with the raw amino-acid sequence, 260 residues long: Ribosome maturation factor RimP (260 aa).

The disordered stretch occupies residues 198–260 (QSLGILPPPP…RGDIDPIEGE (63 aa)). 2 stretches are compositionally biased toward basic and acidic residues: residues 210–228 (AKTD…ENGK) and 238–254 (NTKE…RGDI).

It belongs to the RimP family.

Its subcellular location is the cytoplasm. Its function is as follows. Required for maturation of 30S ribosomal subunits. The sequence is that of Ribosome maturation factor RimP from Nitrobacter winogradskyi (strain ATCC 25391 / DSM 10237 / CIP 104748 / NCIMB 11846 / Nb-255).